The chain runs to 211 residues: tRNA (guanine-N(7)-)-methyltransferase (211 aa).

The S-adenosyl-L-methionine site is built by glutamate 44, aspartate 69, aspartate 96, and aspartate 118. Aspartate 118 is an active-site residue. Substrate is bound at residue lysine 122. The interval 124–129 (RHEKRR) is interaction with RNA. Residues aspartate 154 and 191–194 (TEYE) each bind substrate.

It belongs to the class I-like SAM-binding methyltransferase superfamily. TrmB family.

It carries out the reaction guanosine(46) in tRNA + S-adenosyl-L-methionine = N(7)-methylguanosine(46) in tRNA + S-adenosyl-L-homocysteine. It participates in tRNA modification; N(7)-methylguanine-tRNA biosynthesis. Functionally, catalyzes the formation of N(7)-methylguanine at position 46 (m7G46) in tRNA. In Streptococcus mutans serotype c (strain ATCC 700610 / UA159), this protein is tRNA (guanine-N(7)-)-methyltransferase.